The following is a 725-amino-acid chain: MAAQCCCRQAPGAEAAPVRPPPEPPPALDVASASSAQLFRLRHLQLGLELRPEARELAGCLVLELCALRPAPRALVLDAHPALRLHSAAFRRAPAAAAETPCAFAFSAPGPGPAPPPPLPAFPEAPGSEPACCPLAFRVDPFTDYGSSLTVTLPPELQAHQPFQVILRYTSTDAPAIWWLDPELTYGCAKPFVFTQGHSVCNRSFFPCFDTPAVKCTYSAVVKAPSGVQVLMSATRSAYMEEEGVFHFHMEHPVPAYLVALVAGDLKPADIGPRSRVWAEPCLLPTATSKLSGAVEQWLSAAERLYGPYMWGRYDIVFLPPSFPIVAMENPCLTFIISSILESDEFLVIDVIHEVAHSWFGNAVTNATWEEMWLSEGLATYAQRRITTETYGAAFTCLETAFRLDALHRQMKLLGEDSPVSKLQVKLEPGVNPSHLMNLFTYEKGYCFVYYLSQLCGDPQRFDDFLRAYVEKYKFTSVVAQDLLDSFLSFFPELKEQSVDCRAGLEFERWLNATGPPLAEPDLSQGSSLTRPVEALFQLWTAEPLDQAAASASAIDISKWRTFQTALFLDRLLDGSPLPQEVVMSLSKCYSSLLDSMNAEIRIRWLQIVVRNDYYPDLHRVRRFLESQMSRMYTIPLYEDLCTGALKSFALEVFYQTQGRLHPNLRRAIQQILSQGLGSSTEPASEPSTELGKAEADTDSDAQALLLGDEAPSSAISLRDVNVSA.

Substrate is bound at residue 326–330 (VAMEN). Position 353 (histidine 353) interacts with Zn(2+). Residue glutamate 354 is the Proton acceptor of the active site. The Zn(2+) site is built by histidine 357 and glutamate 376. The segment at 676 to 699 (GLGSSTEPASEPSTELGKAEADTD) is disordered. The segment covering 679–690 (SSTEPASEPSTE) has biased composition (low complexity).

The protein belongs to the peptidase M1 family. It depends on Zn(2+) as a cofactor. As to expression, ubiquitously expressed. Expressed at relatively higher levels in heart and skeletal muscle.

It catalyses the reaction Release of N-terminal amino acids, preferentially methionine, from peptides and arylamides.. Its activity is regulated as follows. Inhibited by calcium but not affected by chloride ions. Inhibited by amastatin and to a lower extent by bestatin. Weakly inhibited by puromycin. Its function is as follows. Broad specificity aminopeptidase which preferentially hydrolyzes an N-terminal methionine, citrulline or glutamine. The protein is Aminopeptidase RNPEPL1 of Homo sapiens (Human).